The following is a 559-amino-acid chain: PHD finger protein 1 (559 aa).

The region spanning 29–86 (PRLWEGQDVLARWTDGLLYLGTIKKVDSAREVCLVQFEDDSQFLVLWKDISPAALPGE) is the Tudor domain. 2 PHD-type zinc fingers span residues 87–142 (ELLC…CVFA) and 186–240 (QSYC…CRGG). Disordered stretches follow at residues 338–434 (PVEL…TDAR) and 448–526 (HPSA…GGVS). Positions 369–386 (WRSEPEPLRRRQKGKVEE) are enriched in basic and acidic residues. 2 stretches are compositionally biased toward polar residues: residues 417–426 (NQSYEGSSGY) and 449–459 (PSASTAGTSGD). The span at 481 to 515 (SSPHSVTASSSSVPALTPGFSRHSPPSPLCRSLSP) shows a compositional bias: low complexity.

The protein belongs to the Polycomblike family. Associated component of the PRC2 complex. Interacts with p53/TP53. Interacts with CHMP1. In terms of tissue distribution, testis-specific.

Its subcellular location is the nucleus. The protein localises to the cytoplasm. It is found in the cytoskeleton. It localises to the microtubule organizing center. The protein resides in the centrosome. In terms of biological role, polycomb group (PcG) that specifically binds histone H3 trimethylated at 'Lys-36' (H3K36me3) and recruits the PRC2 complex. Involved in DNA damage response and is recruited at double-strand breaks (DSBs). Acts by binding to H3K36me3, a mark for transcriptional activation, and recruiting the PRC2 complex: it is however unclear whether recruitment of the PRC2 complex to H3K36me3 leads to enhance or inhibit H3K27me3 methylation mediated by the PRC2 complex. According to some reports, PRC2 recruitment by PHF1 promotes H3K27me3 and subsequent gene silencing by inducing spreading of PRC2 and H3K27me3 into H3K36me3 loci. According to other reports, PHF1 recruits the PRC2 complex at double-strand breaks (DSBs) and inhibits the activity of PRC2. Regulates p53/TP53 stability and prolonges its turnover: may act by specifically binding to a methylated from of p53/TP53. The protein is PHD finger protein 1 (Phf1) of Mus musculus (Mouse).